The chain runs to 308 residues: Elongation factor Ts (308 aa).

Positions 80-83 (TDFV) are involved in Mg(2+) ion dislocation from EF-Tu.

Belongs to the EF-Ts family.

The protein localises to the cytoplasm. Functionally, associates with the EF-Tu.GDP complex and induces the exchange of GDP to GTP. It remains bound to the aminoacyl-tRNA.EF-Tu.GTP complex up to the GTP hydrolysis stage on the ribosome. The chain is Elongation factor Ts from Allorhizobium ampelinum (strain ATCC BAA-846 / DSM 112012 / S4) (Agrobacterium vitis (strain S4)).